The chain runs to 257 residues: NH(3)-dependent NAD(+) synthetase (257 aa).

Position 40 to 47 (40 to 47 (GISGGIDS)) interacts with ATP. Asp46 contacts Mg(2+). Deamido-NAD(+) is bound at residue Arg121. ATP is bound at residue Thr141. Glu146 contributes to the Mg(2+) binding site. Positions 154 and 161 each coordinate deamido-NAD(+). The ATP site is built by Lys170 and Ser192. Residue 238-239 (HK) coordinates deamido-NAD(+).

The protein belongs to the NAD synthetase family. In terms of assembly, homodimer.

The catalysed reaction is deamido-NAD(+) + NH4(+) + ATP = AMP + diphosphate + NAD(+) + H(+). It functions in the pathway cofactor biosynthesis; NAD(+) biosynthesis; NAD(+) from deamido-NAD(+) (ammonia route): step 1/1. Its function is as follows. Catalyzes the ATP-dependent amidation of deamido-NAD to form NAD. Uses ammonia as a nitrogen source. The protein is NH(3)-dependent NAD(+) synthetase of Mycoplasmopsis pulmonis (strain UAB CTIP) (Mycoplasma pulmonis).